A 295-amino-acid polypeptide reads, in one-letter code: UDP-N-acetylenolpyruvoylglucosamine reductase (295 aa).

In terms of domain architecture, FAD-binding PCMH-type spans Lys24–Gly188. Residue Arg168 is part of the active site. The Proton donor role is filled by Ser217. Residue Glu287 is part of the active site.

It belongs to the MurB family. FAD serves as cofactor.

Its subcellular location is the cytoplasm. The catalysed reaction is UDP-N-acetyl-alpha-D-muramate + NADP(+) = UDP-N-acetyl-3-O-(1-carboxyvinyl)-alpha-D-glucosamine + NADPH + H(+). It participates in cell wall biogenesis; peptidoglycan biosynthesis. In terms of biological role, cell wall formation. The polypeptide is UDP-N-acetylenolpyruvoylglucosamine reductase (Rickettsia rickettsii (strain Iowa)).